The sequence spans 232 residues: Phosphoglycolate phosphatase (232 aa).

The Nucleophile role is filled by Asp-13. The Mg(2+) site is built by Asp-13, Asp-15, and Asp-175.

Belongs to the HAD-like hydrolase superfamily. CbbY/CbbZ/Gph/YieH family. Monomer. Requires Mg(2+) as cofactor. It depends on chloride as a cofactor.

It carries out the reaction 2-phosphoglycolate + H2O = glycolate + phosphate. It participates in organic acid metabolism; glycolate biosynthesis; glycolate from 2-phosphoglycolate: step 1/1. Its function is as follows. Specifically catalyzes the dephosphorylation of 2-phosphoglycolate. Is involved in the dissimilation of the intracellular 2-phosphoglycolate formed during the DNA repair of 3'-phosphoglycolate ends, a major class of DNA lesions induced by oxidative stress. In Yersinia pseudotuberculosis serotype I (strain IP32953), this protein is Phosphoglycolate phosphatase.